A 319-amino-acid polypeptide reads, in one-letter code: Probable NAD(P)H-dependent D-xylose reductase xyl1 (319 aa).

The Proton donor role is filled by Tyr-50. A substrate-binding site is contributed by His-112. NAD(+) is bound by residues 166–167 (SN), 215–224 (SSFGPLSFLE), and 271–281 (KSNNPTRLSQN).

This sequence belongs to the aldo/keto reductase family.

It carries out the reaction xylitol + NAD(+) = D-xylose + NADH + H(+). It catalyses the reaction xylitol + NADP(+) = D-xylose + NADPH + H(+). It participates in carbohydrate metabolism; D-xylose degradation. Catalyzes the initial reaction in the xylose utilization pathway by reducing D-xylose into xylitol. Xylose is a major component of hemicelluloses such as xylan. Most fungi utilize D-xylose via three enzymatic reactions, xylose reductase (XR), xylitol dehydrogenase (XDH), and xylulokinase, to form xylulose 5-phosphate, which enters pentose phosphate pathway. In Aspergillus oryzae (strain ATCC 42149 / RIB 40) (Yellow koji mold), this protein is Probable NAD(P)H-dependent D-xylose reductase xyl1 (xyl1).